The primary structure comprises 265 residues: tRNA (guanine-N(1)-)-methyltransferase (265 aa).

S-adenosyl-L-methionine is bound by residues G119 and 139–144 (VGDYIL).

The protein belongs to the RNA methyltransferase TrmD family. Homodimer.

It localises to the cytoplasm. The enzyme catalyses guanosine(37) in tRNA + S-adenosyl-L-methionine = N(1)-methylguanosine(37) in tRNA + S-adenosyl-L-homocysteine + H(+). In terms of biological role, specifically methylates guanosine-37 in various tRNAs. In Pseudoalteromonas atlantica (strain T6c / ATCC BAA-1087), this protein is tRNA (guanine-N(1)-)-methyltransferase.